Here is a 233-residue protein sequence, read N- to C-terminus: Zein-alpha PMS2 (233 aa).

The first 21 residues, 1–21 (MAAKIFCFLMLLGLSASVATA), serve as a signal peptide directing secretion.

The protein belongs to the zein family.

In terms of biological role, zeins are major seed storage proteins. This chain is Zein-alpha PMS2 (ZMPMS2), found in Zea mays (Maize).